Here is a 131-residue protein sequence, read N- to C-terminus: Small ribosomal subunit protein uS11 (131 aa).

Belongs to the universal ribosomal protein uS11 family. As to quaternary structure, part of the 30S ribosomal subunit. Interacts with proteins S7 and S18. Binds to IF-3.

In terms of biological role, located on the platform of the 30S subunit, it bridges several disparate RNA helices of the 16S rRNA. Forms part of the Shine-Dalgarno cleft in the 70S ribosome. The chain is Small ribosomal subunit protein uS11 from Bacillus licheniformis (strain ATCC 14580 / DSM 13 / JCM 2505 / CCUG 7422 / NBRC 12200 / NCIMB 9375 / NCTC 10341 / NRRL NRS-1264 / Gibson 46).